The sequence spans 231 residues: Probable GTP-binding protein EngB (231 aa).

In terms of domain architecture, EngB-type G spans Asp-51–Pro-231. GTP-binding positions include Gly-59–Ser-66, Gly-86–Glu-90, Asp-109–Gly-112, Thr-176–Asp-179, and Thr-210–Ser-212. Positions 66 and 88 each coordinate Mg(2+).

It belongs to the TRAFAC class TrmE-Era-EngA-EngB-Septin-like GTPase superfamily. EngB GTPase family. The cofactor is Mg(2+).

Necessary for normal cell division and for the maintenance of normal septation. The chain is Probable GTP-binding protein EngB from Rhodospirillum rubrum (strain ATCC 11170 / ATH 1.1.1 / DSM 467 / LMG 4362 / NCIMB 8255 / S1).